The sequence spans 650 residues: Chaperone protein HtpG (650 aa).

Residues 1 to 349 are a; substrate-binding; sequence MTKTTKKFET…SSDLPLNVSR (349 aa). Residues 350 to 566 form a b region; that stretch reads EILQEDVQIK…EHGLNANMER (217 aa). The tract at residues 567 to 650 is c; the sequence is ILRAMNQDVP…VADGKAAAGE (84 aa).

The protein belongs to the heat shock protein 90 family. As to quaternary structure, homodimer.

It is found in the cytoplasm. Molecular chaperone. Has ATPase activity. The chain is Chaperone protein HtpG from Geobacter metallireducens (strain ATCC 53774 / DSM 7210 / GS-15).